Reading from the N-terminus, the 212-residue chain is Ependymin (212 aa).

The first 20 residues, 1–20, serve as a signal peptide directing secretion; the sequence is MRLTGLLCVALWSASAVVLA. N-linked (GlcNAc...) asparagine glycans are attached at residues asparagine 69, asparagine 92, and asparagine 112.

The protein belongs to the ependymin family. In terms of assembly, forms disulfide-linked dimers. Binds calcium through the terminal sialic acids. As to expression, EPDs are synthesized in the meninx and secreted in the cerebrospinal fluid.

It is found in the secreted. Functionally, may play a role in neural plasticity. May be involved during axon regeneration. The sequence is that of Ependymin (epd) from Clupea harengus (Atlantic herring).